Consider the following 332-residue polypeptide: Malate dehydrogenase, cytoplasmic (332 aa).

Residues glycine 11 to alanine 17 and aspartate 42 contribute to the NAD(+) site. Substrate is bound by residues arginine 92 and arginine 98. NAD(+) contacts are provided by residues asparagine 105, glutamine 112, and valine 129 to asparagine 131. Residues asparagine 131 and arginine 162 each coordinate substrate. Residue histidine 187 is the Proton acceptor of the active site.

The protein belongs to the LDH/MDH superfamily. MDH type 2 family. As to quaternary structure, homodimer.

The protein localises to the cytoplasm. The enzyme catalyses (S)-malate + NAD(+) = oxaloacetate + NADH + H(+). Its activity is regulated as follows. By arsenate for both the forward and reverse reactions. In terms of biological role, malate dehydrogenase. Has no activity with NADPH as substrate. Does not show lactate dehydrogenase activity. This chain is Malate dehydrogenase, cytoplasmic, found in Taenia solium (Pork tapeworm).